The following is a 728-amino-acid chain: MITIVVIPTAHFSWTDTNFLNSVDYRLTSQPKIRDRFAVYAPGWLRRQLDEFSASLTASELLQALQTIPIPVKARCLLLPKPKRFAQWLLDVPSANIWHIPVTTLRATVASKHPSSDVYNYIPDHVPPSAEFDTVTRRVAAGRDIYVRSTKVLGAPLCLAAPAKYYAGYLSTHQLDGVYPDNWAPDNFHKREFCLTILPSLLGPRTFLLDVDADRDASYPLSVLWPQLRVLALKSRLLLPPVALLRRVVDPGLKPTWSADSDAAFRALRLSRPSSASKPTGFDFSALPVVDIICLFESEPDDHGRVAPGTRLTIHSVPTDLLTSLSIQEGVRYPLRQESGMFVPWVLLALLMSDDVTISGTRRSVKLETAHASARPFVHITVERCASARVVDVRGSPAMYANAVCLTLPKGSYKSTIIDTLPAMFSDLSILEQAAVIDSDALGDSLRPSFETQFLERLENLDPKLLDRAVASILSPASDTSDDAVTTVLDVFNALYREVMTPAQRSRLPLLTQQGRVLAFAHSDYELLSANIPIQVVRGSIPIDHVVNLLARRNRVGGTALQVLLDYCYRTQASPLAPTPAGRLYKQLFGPWLMVPRLSDPLIKLRLVASAPAKVLRAAGWTIDGDPPLEVSCLCAYVTDRAMAAALIERRLDSRALVNVGGDQLMFVEYAPPLPLVSIPRTFLLPVTYVVHWVSPQRVLLNGGNVSFTSGLEWTFDDDPQVVTSTGV.

This sequence belongs to the reoviridae microtubule-associated protein family.

Its subcellular location is the virion. The protein resides in the host cytoplasm. It is found in the host cytoskeleton. Its function is as follows. Minor inner capsid component. Displays NTPase and RNA 5'-triphosphatase (RTPase) activities. May function as a cofactor of polymerase. Associates with microtubules and plays a role in the formation, structural organization and morphology of viral inclusions, where the assembly of cores and the replication of viral RNA occur. In Aquareovirus C (isolate Golden shiner/USA/GSRV/1977) (AQRV-C), this protein is Microtubule-associated protein VP5 (S5).